A 224-amino-acid chain; its full sequence is Ribonuclease 3 (224 aa).

In terms of domain architecture, RNase III spans 4–127; it reads IEKLEQSLTY…IIGAIHLEAG (124 aa). Position 40 (E40) interacts with Mg(2+). D44 is an active-site residue. D113 and E116 together coordinate Mg(2+). The active site involves E116. One can recognise a DRBM domain in the interval 154–223; the sequence is DYKTKLQEIT…AKIALEKLGA (70 aa).

This sequence belongs to the ribonuclease III family. As to quaternary structure, homodimer. It depends on Mg(2+) as a cofactor.

It is found in the cytoplasm. It carries out the reaction Endonucleolytic cleavage to 5'-phosphomonoester.. In terms of biological role, digests double-stranded RNA. Involved in the processing of primary rRNA transcript to yield the immediate precursors to the large and small rRNAs (23S and 16S). Processes some mRNAs, and tRNAs when they are encoded in the rRNA operon. Processes pre-crRNA and tracrRNA of type II CRISPR loci if present in the organism. This chain is Ribonuclease 3, found in Campylobacter jejuni subsp. jejuni serotype O:6 (strain 81116 / NCTC 11828).